A 146-amino-acid polypeptide reads, in one-letter code: Hemoglobin subunit beta-A/B (146 aa).

Glycine 1 carries the post-translational modification N-acetylserine; in variant beta-B. Positions 2 to 146 (FLTAEEKGLV…VANALAHKYH (145 aa)) constitute a Globin domain. The residue at position 44 (serine 44) is a Phosphoserine. Lysine 59 carries the N6-acetyllysine modification. Heme b is bound at residue histidine 63. Lysine 82 is subject to N6-acetyllysine. Histidine 92 lines the heme b pocket. The residue at position 93 (cysteine 93) is an S-nitrosocysteine. Lysine 144 is subject to N6-acetyllysine.

The protein belongs to the globin family. In terms of assembly, heterotetramer of two alpha chains and two beta chains. As to expression, red blood cells.

Functionally, involved in oxygen transport from the lung to the various peripheral tissues. The sequence is that of Hemoglobin subunit beta-A/B (HBB) from Felis catus (Cat).